Consider the following 748-residue polypeptide: Tyrosine--tRNA ligase 2, cytoplasmic (748 aa).

N-acetylmethionine is present on M1. The 'HIGH' region motif lies at 441-449; sequence PSGRMHIAQ. 4 residues coordinate L-tyrosine: Y564, Q568, D571, and Q586. The 'KMSKS' region motif lies at 623-627; that stretch reads KMSKS. An ATP-binding site is contributed by K626.

Belongs to the class-I aminoacyl-tRNA synthetase family.

It is found in the cytoplasm. It localises to the cytosol. The catalysed reaction is tRNA(Tyr) + L-tyrosine + ATP = L-tyrosyl-tRNA(Tyr) + AMP + diphosphate + H(+). Its function is as follows. Catalyzes the attachment of tyrosine to tRNA(Tyr) in a two-step reaction: tyrosine is first activated by ATP to form Tyr-AMP and then transferred to the acceptor end of tRNA(Tyr). The sequence is that of Tyrosine--tRNA ligase 2, cytoplasmic from Arabidopsis thaliana (Mouse-ear cress).